The sequence spans 196 residues: Small ribosomal subunit protein uS4c (196 aa).

The 62-residue stretch at 82-143 folds into the S4 RNA-binding domain; that stretch reads MRLDNILFRL…KQKSKALIQN (62 aa).

It belongs to the universal ribosomal protein uS4 family. Part of the 30S ribosomal subunit. Contacts protein S5. The interaction surface between S4 and S5 is involved in control of translational fidelity.

The protein resides in the plastid. It localises to the chloroplast. In terms of biological role, one of the primary rRNA binding proteins, it binds directly to 16S rRNA where it nucleates assembly of the body of the 30S subunit. Functionally, with S5 and S12 plays an important role in translational accuracy. This chain is Small ribosomal subunit protein uS4c (rps4), found in Patersonia sp. (strain Lejeune 1997).